The following is a 216-amino-acid chain: UPF0323 lipoprotein HPG27_212 (216 aa).

Positions 1-27 are cleaved as a signal peptide; that stretch reads MKKPYRKISDYAIVGGLSALVMVSIVG. The N-palmitoyl cysteine moiety is linked to residue Cys-28. Residue Cys-28 is the site of S-diacylglycerol cysteine attachment. Polar residues predominate over residues 159–170; it reads QRTYKSPQAYQR. The interval 159–216 is disordered; the sequence is QRTYKSPQAYQRSQNSFSKSAPSASSMGGASKGQSGFFGSSRPTSSPAVSSGTRGFNS. Positions 171–209 are enriched in low complexity; sequence SQNSFSKSAPSASSMGGASKGQSGFFGSSRPTSSPAVSS.

It belongs to the UPF0323 family.

It localises to the cell membrane. The protein is UPF0323 lipoprotein HPG27_212 of Helicobacter pylori (strain G27).